Reading from the N-terminus, the 408-residue chain is Aspartate aminotransferase (408 aa).

L-aspartate-binding residues include Gly45, Trp134, and Asn184. N6-(pyridoxal phosphate)lysine is present on Lys247. Position 382 (Arg382) interacts with L-aspartate.

This sequence belongs to the class-I pyridoxal-phosphate-dependent aminotransferase family. Homodimer. The cofactor is pyridoxal 5'-phosphate.

It localises to the cytoplasm. The enzyme catalyses L-aspartate + 2-oxoglutarate = oxaloacetate + L-glutamate. Functionally, catalyzes the reversible conversion of aspartate and 2-oxoglutarate to glutamate and oxaloacetate. Does not have prephenate aminotransferase activity. The polypeptide is Aspartate aminotransferase (Streptomyces avermitilis (strain ATCC 31267 / DSM 46492 / JCM 5070 / NBRC 14893 / NCIMB 12804 / NRRL 8165 / MA-4680)).